We begin with the raw amino-acid sequence, 299 residues long: 4-hydroxybenzoate octaprenyltransferase (299 aa).

8 helical membrane-spanning segments follow: residues 33-53 (VGFLLLLWPTWWALWLAADGV), 56-76 (WWTLCVFTTGIWLTRSAGCVI), 105-125 (NALLMFGTLMLIAFGLVLTMN), 151-171 (LPQVYLGIAFGWGIPMAFAAI), 180-200 (WLLYVANILWTTAYDTWYAMV), 214-234 (AILFADLDLVVQGVLYTLMLL), 247-267 (HTYWISLISAVALIGYQFIIA), and 278-298 (AFMHNNWVGMTIFAGIALATT).

It belongs to the UbiA prenyltransferase family. Mg(2+) is required as a cofactor.

It is found in the cell inner membrane. It carries out the reaction all-trans-octaprenyl diphosphate + 4-hydroxybenzoate = 4-hydroxy-3-(all-trans-octaprenyl)benzoate + diphosphate. It functions in the pathway cofactor biosynthesis; ubiquinone biosynthesis. In terms of biological role, catalyzes the prenylation of para-hydroxybenzoate (PHB) with an all-trans polyprenyl group. Mediates the second step in the final reaction sequence of ubiquinone-8 (UQ-8) biosynthesis, which is the condensation of the polyisoprenoid side chain with PHB, generating the first membrane-bound Q intermediate 3-octaprenyl-4-hydroxybenzoate. The chain is 4-hydroxybenzoate octaprenyltransferase from Xylella fastidiosa (strain M23).